The following is a 97-amino-acid chain: MPSSNGPRQATRNKLKNDARERGTSPPQRSIEEYDDGEKVHLKLDPSVPNGQFHPRFNGRTGTVVGEQGDAFKVEIEDGNVTKTVIAAPAHLRRQQA.

Residues 1–12 (MPSSNGPRQATR) are compositionally biased toward polar residues. Residues 1 to 35 (MPSSNGPRQATRNKLKNDARERGTSPPQRSIEEYD) form a disordered region.

This sequence belongs to the eukaryotic ribosomal protein eL21 family.

The protein is Large ribosomal subunit protein eL21 of Natronomonas pharaonis (strain ATCC 35678 / DSM 2160 / CIP 103997 / JCM 8858 / NBRC 14720 / NCIMB 2260 / Gabara) (Halobacterium pharaonis).